We begin with the raw amino-acid sequence, 296 residues long: Diguanylate cyclase DgcS (296 aa).

One can recognise a GGDEF domain in the interval 165-293; sequence GSVSLIVLDL…GRNCYKLSPT (129 aa). Residues aspartate 173, leucine 174, and aspartate 216 each contribute to the Mg(2+) site. Aspartate 216 is an active-site residue.

Requires Mg(2+) as cofactor.

The catalysed reaction is 2 GTP = 3',3'-c-di-GMP + 2 diphosphate. Functionally, catalyzes the synthesis of cyclic-di-GMP (c-di-GMP) via the condensation of 2 GTP molecules. May be involved in the regulation of formation of solid surface-associated biofilms and pellicles according to environmental conditions. This is Diguanylate cyclase DgcS from Shewanella oneidensis (strain ATCC 700550 / JCM 31522 / CIP 106686 / LMG 19005 / NCIMB 14063 / MR-1).